The chain runs to 572 residues: Proline--tRNA ligase (572 aa).

Belongs to the class-II aminoacyl-tRNA synthetase family. ProS type 1 subfamily. Homodimer.

Its subcellular location is the cytoplasm. The catalysed reaction is tRNA(Pro) + L-proline + ATP = L-prolyl-tRNA(Pro) + AMP + diphosphate. Functionally, catalyzes the attachment of proline to tRNA(Pro) in a two-step reaction: proline is first activated by ATP to form Pro-AMP and then transferred to the acceptor end of tRNA(Pro). As ProRS can inadvertently accommodate and process non-cognate amino acids such as alanine and cysteine, to avoid such errors it has two additional distinct editing activities against alanine. One activity is designated as 'pretransfer' editing and involves the tRNA(Pro)-independent hydrolysis of activated Ala-AMP. The other activity is designated 'posttransfer' editing and involves deacylation of mischarged Ala-tRNA(Pro). The misacylated Cys-tRNA(Pro) is not edited by ProRS. This chain is Proline--tRNA ligase, found in Erwinia tasmaniensis (strain DSM 17950 / CFBP 7177 / CIP 109463 / NCPPB 4357 / Et1/99).